We begin with the raw amino-acid sequence, 154 residues long: UPF0260 protein HI_1355 (154 aa).

The protein belongs to the UPF0260 family.

This chain is UPF0260 protein HI_1355, found in Haemophilus influenzae (strain ATCC 51907 / DSM 11121 / KW20 / Rd).